The chain runs to 765 residues: Glucosamine inositolphosphorylceramide transferase 1 (765 aa).

3 helical membrane passes run 43-63 (FFASCFGFYAFVAATYAWFVF), 394-414 (VILGYASLAAAISVVILLGFL), and 476-496 (MGKFTLGVIVILGLLLTCVGV). Substrate is bound by residues asparagine 553, 577-582 (NSLNNR), 598-600 (DDD), arginine 628, and 683-687 (FNCED). Mn(2+) is bound at residue aspartate 600. Cysteines 685 and 738 form a disulfide. Residue aspartate 687 is part of the active site.

The protein belongs to the glycosyltransferase 64 family. The cofactor is Mn(2+). As to expression, specifically and highly expressed in developing embryos and mature seeds. Also detected at low levels in stigma and pollen.

It localises to the membrane. It catalyses the reaction an N-(2R-hydroxy-very-long-chain fatty acyl)-(R)-4-hydroxysphingoid base + a 1,2-diacyl-sn-glycero-3-phospho-(1D-myo-inositol) = a 1D-myo-inositol-1-phospho-N-[(R)-2-hydroxy-very-long-chain fatty acyl]-(R)-4-hydroxysphingoid base + a 1,2-diacyl-sn-glycerol. It participates in sphingolipid metabolism. Its function is as follows. Glycosyltransferase that mediates the glycosylation of glycosylinositol phosphorylceramides (GIPCs), the major sphingolipids in the plasma membrane; acts as a HexN(Ac)-specific GIPC sugar transferase and accepts glucosamine (GlcN) and N-acetylglucosamine (GlcNAc) as the sugar unit. Responsible for the glycosylation of a subgroup of GIPCs found in seeds and pollen that contain GlcNAc and GlcN (GlcN(Ac)). Maybe involved in the maintenance of cell-cell adhesion. The protein is Glucosamine inositolphosphorylceramide transferase 1 of Arabidopsis thaliana (Mouse-ear cress).